A 771-amino-acid chain; its full sequence is MIPADIIASIAGLVNEKDIEKITSEYQDNIWEFVESLVTHVLASNHVGYSDYNTSSFISEELARQKLSCGLNIPNAVSKSLWALHLAHEHVEKLKDLSDIPPIGYRVILEFYLVWQQLLIDPEETIRTEIEPIMEKLRVLIAEENDAFTSEDRCQIQLEMAAVRFQFYEYDKADNLIKSASEECQLNMDLSGMMGKRTRFQQRDIAQLVLIHKDPSTTGTPLPPDSDIPQSLDMNDDTLLEQVAITEQGARVDGRTLNACQLSCLLWIARHESATHRHDVLVHERCSPVLDTVIAARRYWSIQAAALLARAELERGRVRQVDRSCTQSELVVKLQQGVDDPVLIKDRLLRTSYILASGLTPFWQSSVLLAGILNSLGCTSEALLILEKLEMWDGVIDCYKQLGQMDKAETLIRRLIEQKPNDSMLHVYLGDITRNLEYFTKAIELSDDRNARAHRSLGHLLLMDKKFEEAYKHLRRSLELQPIQLGTWFNAGYCAWKLENFKESTQCYHRCVSLQPDHFEAWNNLSAAYIRHGQKPKAWKLLQEALKYNYEHPNVWENYMLLSVDVGEFSQAIQAYHRLLDMNKRGADDEVLELIAQTLLRREAEISMDESEDKAQNEAENRKEKEEMIKLLARISANHQTLSPKTLRVYALLKKPSVLSSETRTEFEKYVRLLEKSLAAANGKLTWPKEEKLALEVVETAVRLAEDRLELAKFIASDTSVKEASAKVRLSLRGILTRLDKDSGSRVSGDETEKLQEIVEVAKSLLDSVAI.

6 TPR repeats span residues 389 to 415 (LEMWDGVIDCYKQLGQMDKAETLIRRL), 416 to 449 (IEQKPNDSMLHVYLGDITRNLEYFTKAIELSDDR), 451 to 484 (ARAHRSLGHLLLMDKKFEEAYKHLRRSLELQPIQ), 485 to 518 (LGTWFNAGYCAWKLENFKESTQCYHRCVSLQPDH), 520 to 552 (EAWNNLSAAYIRHGQKPKAWKLLQEALKYNYEH), and 553 to 586 (PNVWENYMLLSVDVGEFSQAIQAYHRLLDMNKRG).

It belongs to the TTC27 family. In terms of tissue distribution, expressed in the spermatheca.

It is found in the cytoplasm. Its function is as follows. Developmental protein required for cell fate determination in both the germline and seam cells of the developing epidermis. Specifically, involved in sex determination and may function in parallel or downstream of other sex determination factors, including tra-2 and fem-3, to promote oogenesis in its role in the regulation of the switch from spermatogenesis to oogenesis in the gonads. Also implicated in the mitosis to meiosis switch in distal tip cells. In Caenorhabditis elegans, this protein is Tetratricopeptide repeat-containing protein trd-1.